Reading from the N-terminus, the 197-residue chain is ATP-dependent Clp protease proteolytic subunit (197 aa).

S98 (nucleophile) is an active-site residue. The active site involves H123.

Belongs to the peptidase S14 family. As to quaternary structure, fourteen ClpP subunits assemble into 2 heptameric rings which stack back to back to give a disk-like structure with a central cavity, resembling the structure of eukaryotic proteasomes.

Its subcellular location is the cytoplasm. It carries out the reaction Hydrolysis of proteins to small peptides in the presence of ATP and magnesium. alpha-casein is the usual test substrate. In the absence of ATP, only oligopeptides shorter than five residues are hydrolyzed (such as succinyl-Leu-Tyr-|-NHMec, and Leu-Tyr-Leu-|-Tyr-Trp, in which cleavage of the -Tyr-|-Leu- and -Tyr-|-Trp bonds also occurs).. Cleaves peptides in various proteins in a process that requires ATP hydrolysis. Has a chymotrypsin-like activity. Plays a major role in the degradation of misfolded proteins. The protein is ATP-dependent Clp protease proteolytic subunit of Ligilactobacillus salivarius (strain UCC118) (Lactobacillus salivarius).